An 882-amino-acid chain; its full sequence is DNA mismatch repair protein MutS (882 aa).

ATP is bound at residue 627–634 (GPNMAGKS).

It belongs to the DNA mismatch repair MutS family.

In terms of biological role, this protein is involved in the repair of mismatches in DNA. It is possible that it carries out the mismatch recognition step. This protein has a weak ATPase activity. This Anaeromyxobacter sp. (strain K) protein is DNA mismatch repair protein MutS.